The sequence spans 402 residues: Speedy protein E6 (402 aa).

The segment at 1-89 (MDRTETRFRK…EEPEKELAPE (89 aa)) is disordered. The span at 16–39 (GKITTSRQPHPQNEQSPQRSTSGY) shows a compositional bias: polar residues. The segment covering 76 to 89 (DESEEEPEKELAPE) has biased composition (acidic residues).

Belongs to the Speedy/Ringo family.

This chain is Speedy protein E6 (SPDYE6), found in Homo sapiens (Human).